We begin with the raw amino-acid sequence, 212 residues long: Imidazole glycerol phosphate synthase subunit HisH (212 aa).

One can recognise a Glutamine amidotransferase type-1 domain in the interval 2 to 212; that stretch reads LTAIIDYESG…MIGNFLTWTP (211 aa). Cysteine 87 functions as the Nucleophile in the catalytic mechanism. Catalysis depends on residues histidine 192 and glutamate 194.

As to quaternary structure, heterodimer of HisH and HisF.

It localises to the cytoplasm. It carries out the reaction 5-[(5-phospho-1-deoxy-D-ribulos-1-ylimino)methylamino]-1-(5-phospho-beta-D-ribosyl)imidazole-4-carboxamide + L-glutamine = D-erythro-1-(imidazol-4-yl)glycerol 3-phosphate + 5-amino-1-(5-phospho-beta-D-ribosyl)imidazole-4-carboxamide + L-glutamate + H(+). It catalyses the reaction L-glutamine + H2O = L-glutamate + NH4(+). The protein operates within amino-acid biosynthesis; L-histidine biosynthesis; L-histidine from 5-phospho-alpha-D-ribose 1-diphosphate: step 5/9. Functionally, IGPS catalyzes the conversion of PRFAR and glutamine to IGP, AICAR and glutamate. The HisH subunit catalyzes the hydrolysis of glutamine to glutamate and ammonia as part of the synthesis of IGP and AICAR. The resulting ammonia molecule is channeled to the active site of HisF. The chain is Imidazole glycerol phosphate synthase subunit HisH from Ruegeria pomeroyi (strain ATCC 700808 / DSM 15171 / DSS-3) (Silicibacter pomeroyi).